The following is a 387-amino-acid chain: Oleoyl-12-hydroxylase FAH12 (387 aa).

Residues 1 to 34 (MGGGGRMSTVITSNNSEKKGGSSHLKRAPHTKPP) form a disordered region. 2 helical membrane-spanning segments follow: residues 61-81 (AYDV…FPYI) and 88-108 (VAWL…WVIG). Positions 109–113 (HECGH) match the Histidine box-1 motif. The chain crosses the membrane as a helical span at residues 121-141 (LADDIVGLIVHSALLVPYFSW). The short motif at 145 to 149 (HRRHH) is the Histidine box-2 element. 3 helical membrane-spanning segments follow: residues 183 to 203 (VLTL…FNVS), 229 to 249 (IYIA…ATMA), and 253 to 273 (AWVM…LVMI). The Histidine box-3 signature appears at 319-323 (HVAHH).

The protein belongs to the fatty acid desaturase type 1 family. In terms of tissue distribution, expressed in seeds. Barely detected in leaves.

The protein resides in the microsome membrane. The catalysed reaction is a 1-acyl-2-(9Z)-octadecenoyl-sn-glycero-3-phosphocholine + 2 Fe(II)-[cytochrome b5] + O2 + 2 H(+) = a 1-acyl-2-[(R)-12-hydroxyoleoyl]-sn-glycero-3-phosphocholine + 2 Fe(III)-[cytochrome b5] + H2O. Its pathway is lipid metabolism; monounsaturated fatty acid biosynthesis. Inhibited by oleoyloxyethyl phosphocholine. Its function is as follows. Oleoyl-12-hydroxylase involved in the biosynthesis of ricinoleate (12-hydroxy-cis-9-octadecenoate), the major fatty acid constituent of the oil seeds from castor bean plants. Catalyzes the hydroxylation at the 12-position of 1-acyl-2-oleoyl-sn-glycero-3-phosphocholine (2-oleoyl-PC), which seems to be the actual physiological subtrate. It uses cytochrome b5 as an electron donor. May also be involved in the production of lesquerolic acid (14-hydroxyeicos-cis-ll-enoic acid) in vitro. This is Oleoyl-12-hydroxylase FAH12 from Ricinus communis (Castor bean).